Here is a 360-residue protein sequence, read N- to C-terminus: Nucleoporin SEH1 (360 aa).

6 WD repeats span residues 10 to 49 (DHKD…DWHC), 55 to 96 (THSG…SNDK), 111 to 152 (DSRT…NLSQ), 160 to 210 (SCKL…RKYA), 217 to 258 (SVSD…KELS), and 276 to 315 (NHNS…NWKC).

Belongs to the WD repeat SEC13 family. Component of the Nup107-160 subcomplex of the nuclear pore complex (NPC). The Nup107-160 subcomplex includes NUP160, NUP133, NUP107, NUP98, NUP85, NUP43, NUP37, SEH1 and SEC13. Component of the GATOR2 subcomplex, composed of MIOS, SEC13, SEH1L, WDR24 and WDR59. The GATOR2 complex interacts with CASTOR1 and CASTOR2; the interaction is negatively regulated by arginine. The GATOR2 complex interacts with SESN1, SESN2 and SESN3; the interaction is negatively regulated by amino acids.

The protein resides in the chromosome. It is found in the centromere. Its subcellular location is the kinetochore. It localises to the nucleus. The protein localises to the nuclear pore complex. The protein resides in the lysosome membrane. With respect to regulation, the GATOR2 complex is negatively regulated by the upstream amino acid sensors CASTOR1 and SESN2, which sequester the GATOR2 complex in absence of amino acids. In the presence of abundant amino acids, GATOR2 is released from CASTOR1 and SESN2 and activated. Component of the Nup107-160 subcomplex of the nuclear pore complex (NPC). The Nup107-160 subcomplex is required for the assembly of a functional NPC. The Nup107-160 subcomplex is also required for normal kinetochore microtubule attachment, mitotic progression and chromosome segregation. This subunit plays a role in recruitment of the Nup107-160 subcomplex to the kinetochore. Functionally, as a component of the GATOR2 complex, functions as an activator of the amino acid-sensing branch of the mTORC1 signaling pathway. The GATOR2 complex indirectly activates mTORC1 through the inhibition of the GATOR1 subcomplex. GATOR2 probably acts as an E3 ubiquitin-protein ligase toward GATOR1. In the presence of abundant amino acids, the GATOR2 complex mediates ubiquitination of the NPRL2 core component of the GATOR1 complex, leading to GATOR1 inactivation. In the absence of amino acids, GATOR2 is inhibited, activating the GATOR1 complex. The protein is Nucleoporin SEH1 (seh1l) of Xenopus tropicalis (Western clawed frog).